The primary structure comprises 245 residues: Protein crossbronx (245 aa).

Residues 20-177 (HQEYKILAEY…VQESIAESKA (158 aa)) form the UBC core domain.

This sequence belongs to the ubiquitin-conjugating enzyme family. FTS subfamily.

This Drosophila mojavensis (Fruit fly) protein is Protein crossbronx (cbx).